Reading from the N-terminus, the 183-residue chain is UPF0200 protein MmarC7_0527 (183 aa).

Position 8–15 (8–15 (GMPGSGKS)) interacts with ATP.

This sequence belongs to the UPF0200 family.

This chain is UPF0200 protein MmarC7_0527, found in Methanococcus maripaludis (strain C7 / ATCC BAA-1331).